A 284-amino-acid chain; its full sequence is UPF0276 protein PA3283 (284 aa).

This sequence belongs to the UPF0276 family.

The chain is UPF0276 protein PA3283 from Pseudomonas aeruginosa (strain ATCC 15692 / DSM 22644 / CIP 104116 / JCM 14847 / LMG 12228 / 1C / PRS 101 / PAO1).